The chain runs to 691 residues: MARKTKLEDYRNIGIMAHIDAGKTTTTERILFYTGVSHKIGEVHDGAATMDWMEQEQERGITITSAATTCFWKDKRINIIDTPGHVDFTIEVERSLRVLDGAVTVFDSVAGVEPQSETVWRQADKYRVPRMCFVNKMDRMGANFYRCVDMIVTRLGAVPLVTQLPIGSEAEFEGLIDLLKMQEIVWKDESLGAEFEYRDIRPELKEQADEYHAKMVELAVEMDDAVMEAYLEGNEPDEATLKKLIRKGTISRKFVPVLCGSAFKNKGVQPMLDAVVDFLPSPLEVERMQGIDPKTEEPDTRGASDDEPLSVLAFKIMNDPFVGSLTFCRIYSGVMTTGTGVLNSTKDNRERIGRMLQMHANHREDIKEAYAGDIVAVAGLKNTTTGDTLCDPLKPIILERMEFPEPVIEVAVEPKTKADQEKMGIALNRLAQEDPSFRVSVDQESGQTVIKGMGELHLDILVDRMRREFKVDANVGAPQVAYRETLTKRAEIDYTHKKQTGGSGQFARVKIVFEPGEPGSGFQFESKIVGGSVPKEYIPGVQKGVESVKDSGPLAGFPMIDFKATLMDGAYHDVDSSVMAFEIASRAAFREGAQQAGVKLLEPIMKVEVVTPEEYMGDVIGDLNSRRGQISGTEQRGIAQVIHANVPLANMFGYVNTLRSMSQGRAQYTMQFDHYEQVPQAVSDEVRAKLA.

In terms of domain architecture, tr-type G spans 8–283 (EDYRNIGIMA…AVVDFLPSPL (276 aa)). GTP-binding positions include 17-24 (AHIDAGKT), 81-85 (DTPGH), and 135-138 (NKMD).

Belongs to the TRAFAC class translation factor GTPase superfamily. Classic translation factor GTPase family. EF-G/EF-2 subfamily.

Its subcellular location is the cytoplasm. Its function is as follows. Catalyzes the GTP-dependent ribosomal translocation step during translation elongation. During this step, the ribosome changes from the pre-translocational (PRE) to the post-translocational (POST) state as the newly formed A-site-bound peptidyl-tRNA and P-site-bound deacylated tRNA move to the P and E sites, respectively. Catalyzes the coordinated movement of the two tRNA molecules, the mRNA and conformational changes in the ribosome. This is Elongation factor G from Parvibaculum lavamentivorans (strain DS-1 / DSM 13023 / NCIMB 13966).